The primary structure comprises 211 residues: Arginine exporter protein ArgO (211 aa).

6 helical membrane-spanning segments follow: residues 1 to 21, 37 to 57, 68 to 88, 111 to 131, 147 to 167, and 179 to 199; these read MISYYFQGFALGAAMILPLGP, LMIALLCALSDLVLISAGIFG, LLALVTWGGVAFLLWYGFGAL, IIATMLAVTWLNPHVYLDTFV, WFALGTISASFLWFFGLALLA, and AQRIINILVGVVMWLIAFQLA.

The protein belongs to the LysE/ArgO transporter (TC 2.A.75) family.

It is found in the cell inner membrane. The catalysed reaction is L-arginine(in) = L-arginine(out). Involved in the export of arginine. Important to control the intracellular level of arginine and the correct balance between arginine and lysine. The sequence is that of Arginine exporter protein ArgO from Salmonella paratyphi C (strain RKS4594).